The chain runs to 182 residues: NADH-quinone oxidoreductase subunit I (182 aa).

4Fe-4S ferredoxin-type domains are found at residues 52–82 (LTRD…LQKA) and 92–121 (DFFR…LTPD). [4Fe-4S] cluster is bound by residues cysteine 62, cysteine 65, cysteine 68, cysteine 72, cysteine 101, cysteine 104, cysteine 107, and cysteine 111.

Belongs to the complex I 23 kDa subunit family. As to quaternary structure, NDH-1 is composed of 13 different subunits. Subunits NuoA, H, J, K, L, M, N constitute the membrane sector of the complex. It depends on [4Fe-4S] cluster as a cofactor.

It is found in the cell inner membrane. The enzyme catalyses a quinone + NADH + 5 H(+)(in) = a quinol + NAD(+) + 4 H(+)(out). Its function is as follows. NDH-1 shuttles electrons from NADH, via FMN and iron-sulfur (Fe-S) centers, to quinones in the respiratory chain. The immediate electron acceptor for the enzyme in this species is believed to be ubiquinone. Couples the redox reaction to proton translocation (for every two electrons transferred, four hydrogen ions are translocated across the cytoplasmic membrane), and thus conserves the redox energy in a proton gradient. In Pseudomonas savastanoi pv. phaseolicola (strain 1448A / Race 6) (Pseudomonas syringae pv. phaseolicola (strain 1448A / Race 6)), this protein is NADH-quinone oxidoreductase subunit I.